We begin with the raw amino-acid sequence, 150 residues long: 3-dehydroquinate dehydratase (150 aa).

The Proton acceptor role is filled by Y25. Residues N76, H82, and D89 each coordinate substrate. H102 serves as the catalytic Proton donor. Residues 103–104 and R113 contribute to the substrate site; that span reads LS.

The protein belongs to the type-II 3-dehydroquinase family. As to quaternary structure, homododecamer.

The enzyme catalyses 3-dehydroquinate = 3-dehydroshikimate + H2O. It participates in metabolic intermediate biosynthesis; chorismate biosynthesis; chorismate from D-erythrose 4-phosphate and phosphoenolpyruvate: step 3/7. Catalyzes a trans-dehydration via an enolate intermediate. The polypeptide is 3-dehydroquinate dehydratase (Trichodesmium erythraeum (strain IMS101)).